The primary structure comprises 515 residues: MVVAYKHEPFTDFSVEANKLAFEEGLKKVESYLGQDYPLIIGGEKITTEDKIVSVNPANKEELVGRVSKASRELAEKAMQVADETFQTWRKSKPEMRADILFRAAAIVRRRKHEFSAILVKEAGKPWNEADADTAEAIDFMEYYGRQMLKLKDGIPVESRPIEYNRFSYIPLGVGVIISPWNFPFAIMAGMTTAALVSGNTVLLKPASTTPVVAAKFMEVLEEAGLPAGVVNFVPGNGSEVGDYLVDHPRTRFVSFTGSRDVGIRIYERAAKVNPGQIWLKRVIAEMGGKDTIVVDKEADLELAAKSIVASAFGFSGQKCSACSRAVIHEDVYDHVLNRAVELTKELTVANPAVLGTNMGPVNDQAAFDKVMSYVAIGKEEGRILAGGEGDDSKGWFIQPTIVADVAEDARLMKEEIFGPVVAFCKAKDFDHALAIANNTEYGLTGAVITNNRDHIEKAREDFHVGNLYFNRGCTGAIVGYQPFGGFNMSGTDSKAGGPDYLALHMQAKTTSETL.

Active-site residues include glutamate 286 and cysteine 320.

Belongs to the aldehyde dehydrogenase family. RocA subfamily.

It carries out the reaction L-glutamate 5-semialdehyde + NAD(+) + H2O = L-glutamate + NADH + 2 H(+). Its pathway is amino-acid degradation; L-proline degradation into L-glutamate; L-glutamate from L-proline: step 2/2. In Bacillus cereus (strain B4264), this protein is 1-pyrroline-5-carboxylate dehydrogenase.